A 283-amino-acid chain; its full sequence is Bis(5'-nucleosyl)-tetraphosphatase, symmetrical (283 aa).

It belongs to the Ap4A hydrolase family.

It carries out the reaction P(1),P(4)-bis(5'-adenosyl) tetraphosphate + H2O = 2 ADP + 2 H(+). In terms of biological role, hydrolyzes diadenosine 5',5'''-P1,P4-tetraphosphate to yield ADP. This Cronobacter sakazakii (strain ATCC BAA-894) (Enterobacter sakazakii) protein is Bis(5'-nucleosyl)-tetraphosphatase, symmetrical.